Reading from the N-terminus, the 319-residue chain is Thioredoxin reductase (319 aa).

FAD is bound at residue 37 to 44 (ERGVPGGQ). Residues Cys136 and Cys139 are joined by a disulfide bond. Residue 279-288 (DVRAKSLRQI) participates in FAD binding.

This sequence belongs to the class-II pyridine nucleotide-disulfide oxidoreductase family. Homodimer. FAD serves as cofactor.

The protein resides in the cytoplasm. It catalyses the reaction [thioredoxin]-dithiol + NADP(+) = [thioredoxin]-disulfide + NADPH + H(+). This Listeria monocytogenes serovar 1/2a (strain ATCC BAA-679 / EGD-e) protein is Thioredoxin reductase (trxB).